A 374-amino-acid chain; its full sequence is Actin-related protein 2/3 complex subunit 2B (374 aa).

This sequence belongs to the ARPC2 family. Component of the Arp2/3 complex composed of ARP2, ARP3, ARPC1/p41-ARC, ARPC2/p34-ARC, ARPC3/p21-ARC, ARPC4/p20-ARC and ARPC5/p16-ARC. In terms of tissue distribution, expressed at low levels in all tissues with a relatively highest expression in inflorescences.

It localises to the cytoplasm. The protein localises to the cytoskeleton. It is found in the cell projection. Its function is as follows. Functions as actin-binding component of the Arp2/3 complex which is involved in regulation of actin polymerization and together with an activating nucleation-promoting factor (NPF) mediates the formation of branched actin networks. Seems to contact the mother actin filament. Arp2/3 complex plays a critical role in the control of cell morphogenesis via the modulation of cell polarity development. In Arabidopsis thaliana (Mouse-ear cress), this protein is Actin-related protein 2/3 complex subunit 2B (ARPC2B).